A 336-amino-acid polypeptide reads, in one-letter code: Ketol-acid reductoisomerase (NADP(+)) (336 aa).

Positions 3-183 (ATMYYDRDVS…GGTRAGVLET (181 aa)) constitute a KARI N-terminal Rossmann domain. NADP(+) is bound by residues 26–29 (YGSQ), Arg-49, Ser-52, Ser-54, and 84–87 (DETQ). Residue His-109 is part of the active site. Position 135 (Gly-135) interacts with NADP(+). In terms of domain architecture, KARI C-terminal knotted spans 184-329 (TFKEETETDL…RELRSKMPFI (146 aa)). Mg(2+) is bound by residues Asp-192, Glu-196, Glu-228, and Glu-232. Substrate is bound at residue Ser-253.

It belongs to the ketol-acid reductoisomerase family. Requires Mg(2+) as cofactor.

It catalyses the reaction (2R)-2,3-dihydroxy-3-methylbutanoate + NADP(+) = (2S)-2-acetolactate + NADPH + H(+). The enzyme catalyses (2R,3R)-2,3-dihydroxy-3-methylpentanoate + NADP(+) = (S)-2-ethyl-2-hydroxy-3-oxobutanoate + NADPH + H(+). It participates in amino-acid biosynthesis; L-isoleucine biosynthesis; L-isoleucine from 2-oxobutanoate: step 2/4. Its pathway is amino-acid biosynthesis; L-valine biosynthesis; L-valine from pyruvate: step 2/4. Involved in the biosynthesis of branched-chain amino acids (BCAA). Catalyzes an alkyl-migration followed by a ketol-acid reduction of (S)-2-acetolactate (S2AL) to yield (R)-2,3-dihydroxy-isovalerate. In the isomerase reaction, S2AL is rearranged via a Mg-dependent methyl migration to produce 3-hydroxy-3-methyl-2-ketobutyrate (HMKB). In the reductase reaction, this 2-ketoacid undergoes a metal-dependent reduction by NADPH to yield (R)-2,3-dihydroxy-isovalerate. The sequence is that of Ketol-acid reductoisomerase (NADP(+)) from Deinococcus geothermalis (strain DSM 11300 / CIP 105573 / AG-3a).